We begin with the raw amino-acid sequence, 496 residues long: Cytochrome P450 3A56 (496 aa).

C441 lines the heme pocket.

The protein belongs to the cytochrome P450 family. It depends on heme as a cofactor. As to expression, highly expressed in liver and intestine. Moderate expression in gill and spleen. Low expression in kidney, brain and heart.

The protein resides in the endoplasmic reticulum membrane. Its subcellular location is the microsome membrane. It carries out the reaction an organic molecule + reduced [NADPH--hemoprotein reductase] + O2 = an alcohol + oxidized [NADPH--hemoprotein reductase] + H2O + H(+). Functionally, putative steroid 6-beta-hydroxylase. The sequence is that of Cytochrome P450 3A56 (cyp3a56) from Fundulus heteroclitus (Killifish).